The sequence spans 380 residues: Cytochrome b (380 aa).

A run of 4 helical transmembrane segments spans residues 34–54 (FGSLLGLCLMTQILTGLLLAM), 78–99 (WLIRNLHANGASFFFICIYLHI), 114–134 (WNTGVILLLTLMATAFVGYVL), and 179–199 (FFALHFLLPFMIAGLTLIHLT). 2 residues coordinate heme b: His84 and His98. Residues His183 and His197 each coordinate heme b. His202 is a binding site for a ubiquinone. Helical transmembrane passes span 227–247 (TKDLLGFLLMIAPLLTLAMFS), 289–309 (LGGVLALAASVLILFLAPFLH), 321–341 (LSQLLFWILVANLLILTWVGS), and 348–368 (FIIIGQIASLTYFTILLILFP).

Belongs to the cytochrome b family. In terms of assembly, the cytochrome bc1 complex contains 11 subunits: 3 respiratory subunits (MT-CYB, CYC1 and UQCRFS1), 2 core proteins (UQCRC1 and UQCRC2) and 6 low-molecular weight proteins (UQCRH/QCR6, UQCRB/QCR7, UQCRQ/QCR8, UQCR10/QCR9, UQCR11/QCR10 and a cleavage product of UQCRFS1). This cytochrome bc1 complex then forms a dimer. Heme b serves as cofactor.

Its subcellular location is the mitochondrion inner membrane. Its function is as follows. Component of the ubiquinol-cytochrome c reductase complex (complex III or cytochrome b-c1 complex) that is part of the mitochondrial respiratory chain. The b-c1 complex mediates electron transfer from ubiquinol to cytochrome c. Contributes to the generation of a proton gradient across the mitochondrial membrane that is then used for ATP synthesis. The chain is Cytochrome b (MT-CYB) from Amazilia tzacatl (Rufous-tailed hummingbird).